The sequence spans 273 residues: Large ribosomal subunit protein uL2 (273 aa).

Disordered stretches follow at residues 28–53 (KPFA…TTRH) and 221–273 (RGTA…RRSK). Over residues 39–48 (KSGGRNNNGR) the composition is skewed to low complexity.

The protein belongs to the universal ribosomal protein uL2 family. As to quaternary structure, part of the 50S ribosomal subunit. Forms a bridge to the 30S subunit in the 70S ribosome.

Its function is as follows. One of the primary rRNA binding proteins. Required for association of the 30S and 50S subunits to form the 70S ribosome, for tRNA binding and peptide bond formation. It has been suggested to have peptidyltransferase activity; this is somewhat controversial. Makes several contacts with the 16S rRNA in the 70S ribosome. The chain is Large ribosomal subunit protein uL2 from Salmonella agona (strain SL483).